We begin with the raw amino-acid sequence, 204 residues long: MIIKNASHEITAVKPIQYPVTGFPEIAFVGRSNVGKSSIINTLVNRKSLARVGSTPGKTRQINFFDVNGEFYLVDLPGYGFANVSKEMKASWQNLIETYLYSRKENFLKMVVMLVDIRHSPSKDDIIMYQWLKGFGLDTLIIANKVDKISRGQIHVRINDIRKVLQLDDAEKVIPFSAENRFGLEKVLAEFDNVLSIPGEEQKD.

Positions 22-197 (GFPEIAFVGR…LAEFDNVLSI (176 aa)) constitute an EngB-type G domain. GTP-binding positions include 30–37 (GRSNVGKS), 57–61 (GKTRQ), 75–78 (DLPG), 144–147 (NKVD), and 176–178 (FSA). Residues S37 and T59 each coordinate Mg(2+).

The protein belongs to the TRAFAC class TrmE-Era-EngA-EngB-Septin-like GTPase superfamily. EngB GTPase family. The cofactor is Mg(2+).

Functionally, necessary for normal cell division and for the maintenance of normal septation. The polypeptide is Probable GTP-binding protein EngB (Ruminiclostridium cellulolyticum (strain ATCC 35319 / DSM 5812 / JCM 6584 / H10) (Clostridium cellulolyticum)).